Consider the following 162-residue polypeptide: UPF0178 protein RHOS4_24670 (162 aa).

Belongs to the UPF0178 family.

In Cereibacter sphaeroides (strain ATCC 17023 / DSM 158 / JCM 6121 / CCUG 31486 / LMG 2827 / NBRC 12203 / NCIMB 8253 / ATH 2.4.1.) (Rhodobacter sphaeroides), this protein is UPF0178 protein RHOS4_24670.